We begin with the raw amino-acid sequence, 198 residues long: Transcription factor FapR (198 aa).

A MaoC-like domain is found at 102-169 (NRIARGHHLF…RTIVEVNSYV (68 aa)).

This sequence belongs to the FapR family.

Functionally, transcriptional factor involved in regulation of membrane lipid biosynthesis by repressing genes involved in fatty acid and phospholipid metabolism. The sequence is that of Transcription factor FapR from Geobacillus sp. (strain WCH70).